Consider the following 70-residue polypeptide: Cecropin-P1 (70 aa).

Positions 1–13 (MFLIYLFVQTAES) are cleaved as a signal peptide. A propeptide spans 45 to 70 (RRRFVAEQDAIHSRVSREVPTLSDSV) (removed in mature form).

Expressed in the body wall, intestine, uterus and ovary.

Its subcellular location is the secreted. Its function is as follows. Has antibacterial activity against several Gram-positive and Gram-negative bacteria. Is weakly active against yeasts. Acts by a nonpore mechanism. In Ascaris suum (Pig roundworm), this protein is Cecropin-P1 (ASCEC-1).